We begin with the raw amino-acid sequence, 527 residues long: Glucose-6-phosphate isomerase (527 aa).

The Proton donor role is filled by E347. Residues H378 and K493 contribute to the active site.

The protein belongs to the GPI family.

The protein resides in the cytoplasm. It carries out the reaction alpha-D-glucose 6-phosphate = beta-D-fructose 6-phosphate. The protein operates within carbohydrate biosynthesis; gluconeogenesis. It functions in the pathway carbohydrate degradation; glycolysis; D-glyceraldehyde 3-phosphate and glycerone phosphate from D-glucose: step 2/4. Its function is as follows. Catalyzes the reversible isomerization of glucose-6-phosphate to fructose-6-phosphate. This Chlamydia caviae (strain ATCC VR-813 / DSM 19441 / 03DC25 / GPIC) (Chlamydophila caviae) protein is Glucose-6-phosphate isomerase.